The following is a 248-amino-acid chain: Acetylglutamate kinase (248 aa).

Residues 36-37 (GG), Arg58, and Asn147 contribute to the substrate site.

It belongs to the acetylglutamate kinase family. ArgB subfamily.

The protein localises to the cytoplasm. The catalysed reaction is N-acetyl-L-glutamate + ATP = N-acetyl-L-glutamyl 5-phosphate + ADP. Its pathway is amino-acid biosynthesis; L-arginine biosynthesis; N(2)-acetyl-L-ornithine from L-glutamate: step 2/4. Functionally, catalyzes the ATP-dependent phosphorylation of N-acetyl-L-glutamate. This chain is Acetylglutamate kinase, found in Thermus thermophilus (strain ATCC BAA-163 / DSM 7039 / HB27).